The sequence spans 279 residues: Fatty acid desaturase 4-like 2, chloroplastic (279 aa).

The N-terminal 30 residues, 1–30, are a transit peptide targeting the chloroplast; that stretch reads MATSLQTKYTLNPITNNIPRSHRPSFLRVT. The next 3 membrane-spanning stretches (helical) occupy residues 68 to 90, 98 to 118, and 178 to 198; these read LWVA…GAFG, SLAG…YHWA, and VVHG…LFHA.

It belongs to the fatty acid desaturase CarF family.

It localises to the plastid. The protein localises to the chloroplast membrane. It participates in lipid metabolism; fatty acid metabolism. Functionally, fatty acid desaturase involved in the production of chloroplast-specific phosphatidylglycerol molecular species. Catalyzes the formation of a trans double bond introduced close to the carboxyl group of palmitic acid, which is specifically esterified to the sn-2 glyceryl carbon of phosphatidylglycerol. The sequence is that of Fatty acid desaturase 4-like 2, chloroplastic (FAD4L2) from Arabidopsis thaliana (Mouse-ear cress).